A 181-amino-acid chain; its full sequence is Acireductone dioxygenase (181 aa).

Acidic residues predominate over residues 1-10 (MRAYIYDEES). Residues 1–23 (MRAYIYDEESQLSPQDEHESSQS) are disordered. Fe(2+) contacts are provided by His82, His84, Glu88, and His128. His82, His84, Glu88, and His128 together coordinate Ni(2+).

Belongs to the acireductone dioxygenase (ARD) family. It depends on Fe(2+) as a cofactor. Ni(2+) serves as cofactor.

It is found in the cytoplasm. The protein localises to the nucleus. The enzyme catalyses 1,2-dihydroxy-5-(methylsulfanyl)pent-1-en-3-one + O2 = 4-methylsulfanyl-2-oxobutanoate + formate + 2 H(+). It carries out the reaction 1,2-dihydroxy-5-(methylsulfanyl)pent-1-en-3-one + O2 = 3-(methylsulfanyl)propanoate + CO + formate + 2 H(+). It participates in amino-acid biosynthesis; L-methionine biosynthesis via salvage pathway; L-methionine from S-methyl-5-thio-alpha-D-ribose 1-phosphate: step 5/6. Its function is as follows. Catalyzes 2 different reactions between oxygen and the acireductone 1,2-dihydroxy-3-keto-5-methylthiopentene (DHK-MTPene) depending upon the metal bound in the active site. Fe-containing acireductone dioxygenase (Fe-ARD) produces formate and 2-keto-4-methylthiobutyrate (KMTB), the alpha-ketoacid precursor of methionine in the methionine recycle pathway. Ni-containing acireductone dioxygenase (Ni-ARD) produces methylthiopropionate, carbon monoxide and formate, and does not lie on the methionine recycle pathway. The chain is Acireductone dioxygenase from Puccinia graminis f. sp. tritici (strain CRL 75-36-700-3 / race SCCL) (Black stem rust fungus).